The following is a 541-amino-acid chain: Membrane protein insertase YidC (541 aa).

The helical transmembrane segment at 6–26 threads the bilayer; the sequence is SLLVLALIFISFLVYQQWQLD. The interval 34 to 56 is disordered; sequence EQTTSITATSDVPASSPSNSQAI. Transmembrane regions (helical) follow at residues 337–357, 416–436, 454–474, and 495–515; these read FWLLTFIQGIVSNWGLAIICV, LGGCLPILLQMPIFIALYWTF, LSAQDPYYILPILMGISMFLL, and PLVFMFFFLWFPSGLVLYWLV.

Belongs to the OXA1/ALB3/YidC family. Type 1 subfamily. In terms of assembly, interacts with the Sec translocase complex via SecD. Specifically interacts with transmembrane segments of nascent integral membrane proteins during membrane integration.

It is found in the cell inner membrane. Required for the insertion and/or proper folding and/or complex formation of integral membrane proteins into the membrane. Involved in integration of membrane proteins that insert both dependently and independently of the Sec translocase complex, as well as at least some lipoproteins. Aids folding of multispanning membrane proteins. The polypeptide is Membrane protein insertase YidC (Haemophilus influenzae (strain 86-028NP)).